A 418-amino-acid polypeptide reads, in one-letter code: uncharacterized protein (418 aa).

Transmembrane regions (helical) follow at residues 51 to 71, 79 to 99, 110 to 130, 163 to 183, 224 to 244, 258 to 278, 289 to 309, 315 to 335, 356 to 376, and 379 to 399; these read FVMAVGGIAAIVAQTPIGALV, ALVVAGAVLVTAAAVAMPLFA, VTGIASSVFAPALAAITLGAV, FFGPVVVFWVLAGMALISVLA, VIFGAAVVAFHFANAAMLPLV, ALMSSCIVAAQVVMVPVAYVV, PIFLVGFAVLTARGFLYTLSD, VGVQLLDGIGAGIFGALFPLV, ATGIGAALSNLVAGWIVVVAG, and AAFMSLGALAGAGFLLYLVAM.

The protein belongs to the major facilitator superfamily.

It localises to the cell membrane. This is an uncharacterized protein from Mycobacterium tuberculosis (strain CDC 1551 / Oshkosh).